Reading from the N-terminus, the 542-residue chain is Sterile alpha motif domain-containing protein 11 (542 aa).

Positions 268–364 are disordered; that stretch reads LLALPPQGPP…GRGLLSGSTL (97 aa). Positions 273–285 are enriched in pro residues; sequence PQGPPGPGPPIPP. Phosphothreonine is present on threonine 342. In terms of domain architecture, SAM spans 404 to 469; the sequence is WTVDDVCNFV…AQVAKRLGRV (66 aa). A disordered region spans residues 486 to 542; it reads LQAPELSPGHQPLSPATTTSPYEGTHLPTGQASPKQENGSGTIALLSGAPDPSQLLQ. Serine 499 is subject to Phosphoserine. Positions 499 to 526 are enriched in polar residues; sequence SPATTTSPYEGTHLPTGQASPKQENGSG.

As to quaternary structure, self-associates. Component of a Polycomb group (PcG) multiprotein PRC1-like complex. Interacts with SAMD7 and PHC2. As to expression, expressed in the outer nuclear layer of rod photoreceptors in the retina (at protein level). Predominantly expressed in retinal photoreceptors and pineal gland.

It localises to the nucleus. Functionally, component of a Polycomb group (PcG) multiprotein PRC1-like complex, essential for establishing rod photoreceptor cell identity and function by silencing nonrod gene expression in developing rod photoreceptor cells. The sequence is that of Sterile alpha motif domain-containing protein 11 (Samd11) from Mus musculus (Mouse).